Consider the following 428-residue polypeptide: Serine--tRNA ligase (428 aa).

235 to 237 is a binding site for L-serine; it reads TAE. Residue 266–268 participates in ATP binding; sequence RSE. E289 is an L-serine binding site. 353 to 356 is an ATP binding site; it reads EISS. L-serine is bound at residue S389.

It belongs to the class-II aminoacyl-tRNA synthetase family. Type-1 seryl-tRNA synthetase subfamily. In terms of assembly, homodimer. The tRNA molecule binds across the dimer.

The protein resides in the cytoplasm. The enzyme catalyses tRNA(Ser) + L-serine + ATP = L-seryl-tRNA(Ser) + AMP + diphosphate + H(+). It carries out the reaction tRNA(Sec) + L-serine + ATP = L-seryl-tRNA(Sec) + AMP + diphosphate + H(+). It functions in the pathway aminoacyl-tRNA biosynthesis; selenocysteinyl-tRNA(Sec) biosynthesis; L-seryl-tRNA(Sec) from L-serine and tRNA(Sec): step 1/1. Catalyzes the attachment of serine to tRNA(Ser). Is also able to aminoacylate tRNA(Sec) with serine, to form the misacylated tRNA L-seryl-tRNA(Sec), which will be further converted into selenocysteinyl-tRNA(Sec). The chain is Serine--tRNA ligase from Shewanella denitrificans (strain OS217 / ATCC BAA-1090 / DSM 15013).